The primary structure comprises 392 residues: Aminomethyltransferase, mitochondrial (392 aa).

Residues 1–16 (MLRAGCRAALARRHLS) constitute a mitochondrion transit peptide. 3 residues coordinate substrate: Glu221, Arg250, and Tyr388.

Belongs to the GcvT family. As to quaternary structure, the glycine cleavage system is composed of four proteins: P, T, L and H.

The protein localises to the mitochondrion. The catalysed reaction is N(6)-[(R)-S(8)-aminomethyldihydrolipoyl]-L-lysyl-[protein] + (6S)-5,6,7,8-tetrahydrofolate = N(6)-[(R)-dihydrolipoyl]-L-lysyl-[protein] + (6R)-5,10-methylene-5,6,7,8-tetrahydrofolate + NH4(+). In terms of biological role, the glycine cleavage system catalyzes the degradation of glycine. This chain is Aminomethyltransferase, mitochondrial, found in Gallus gallus (Chicken).